We begin with the raw amino-acid sequence, 74 residues long: U-actitoxin-Bgr3a (74 aa).

Residues 1-21 form the signal peptide; the sequence is MSAQRFLFLLVVTSLIAASLA. A propeptide spanning residues 22–29 is cleaved from the precursor; that stretch reads APKDVQLT. 3 cysteine pairs are disulfide-bonded: Cys35–Cys68, Cys37–Cys61, and Cys51–Cys69.

The protein belongs to the sea anemone type 3 (BDS) potassium channel toxin family.

It is found in the secreted. The protein localises to the nematocyst. In terms of biological role, potently and selectively inhibits voltage-gated potassium channels Kv11/KCNH/ERG. Acts as a gating-modifier toxin that shifts the voltage-dependence of ERG activation in the positive direction and suppresses its current amplitudes elicited by strong depolarizing pulses that maximally activate the channels. The sequence is that of U-actitoxin-Bgr3a from Bunodosoma granuliferum (Red warty sea anemone).